The primary structure comprises 101 residues: Apolipoprotein C-II (101 aa).

The N-terminal stretch at methionine 1–glycine 22 is a signal peptide. The tract at residues threonine 66–methionine 74 is lipid binding. Residues serine 78–glutamate 101 form a lipoprotein lipase cofactor region.

This sequence belongs to the apolipoprotein C2 family. In terms of processing, proapolipoprotein C-II is synthesized as a sialic acid containing glycoprotein which is subsequently desialylated prior to its proteolytic processing. Post-translationally, proapolipoprotein C-II, the major form found in plasma undergoes proteolytic cleavage of its N-terminal hexapeptide to generate apolipoprotein C-II, which occurs as the minor form in plasma.

Its subcellular location is the secreted. Functionally, component of chylomicrons, very low-density lipoproteins (VLDL), low-density lipoproteins (LDL), and high-density lipoproteins (HDL) in plasma. Plays an important role in lipoprotein metabolism as an activator of lipoprotein lipase. Both proapolipoprotein C-II and apolipoprotein C-II can activate lipoprotein lipase. The chain is Apolipoprotein C-II (APOC2) from Tapirus indicus (Asiatic tapir).